Reading from the N-terminus, the 114-residue chain is Fluoride-specific ion channel FluC 2 (114 aa).

Transmembrane regions (helical) follow at residues 3–23 (YVIIGGAVGACLRFAVSECWL), 31–51 (LMTAVFVINISGCAMLGWILA), 57–77 (GIELLFISMLGGFTTFSTFCM), and 92–112 (MIYLVISIVGSLFGFLFGWNV). Residues Gly-67 and Thr-70 each contribute to the Na(+) site.

It belongs to the fluoride channel Fluc/FEX (TC 1.A.43) family.

It is found in the cell membrane. The enzyme catalyses fluoride(in) = fluoride(out). Na(+) is not transported, but it plays an essential structural role and its presence is essential for fluoride channel function. Its function is as follows. Fluoride-specific ion channel. Important for reducing fluoride concentration in the cell, thus reducing its toxicity. This is Fluoride-specific ion channel FluC 2 from Shouchella clausii (strain KSM-K16) (Alkalihalobacillus clausii).